The sequence spans 223 residues: tRNA (guanine-N(7)-)-methyltransferase (223 aa).

Glu45, Glu70, and Asp125 together coordinate S-adenosyl-L-methionine. Asp125 is a catalytic residue. Residues Lys129, Asp161, and 201-204 (TEYE) contribute to the substrate site.

Belongs to the class I-like SAM-binding methyltransferase superfamily. TrmB family.

It carries out the reaction guanosine(46) in tRNA + S-adenosyl-L-methionine = N(7)-methylguanosine(46) in tRNA + S-adenosyl-L-homocysteine. Its pathway is tRNA modification; N(7)-methylguanine-tRNA biosynthesis. Its function is as follows. Catalyzes the formation of N(7)-methylguanine at position 46 (m7G46) in tRNA. In Mesoplasma florum (strain ATCC 33453 / NBRC 100688 / NCTC 11704 / L1) (Acholeplasma florum), this protein is tRNA (guanine-N(7)-)-methyltransferase.